A 65-amino-acid polypeptide reads, in one-letter code: Large ribosomal subunit protein uL30 (65 aa).

It belongs to the universal ribosomal protein uL30 family. In terms of assembly, part of the 50S ribosomal subunit.

In Onion yellows phytoplasma (strain OY-M), this protein is Large ribosomal subunit protein uL30.